We begin with the raw amino-acid sequence, 134 residues long: Small ribosomal subunit protein uS11 (134 aa).

The protein belongs to the universal ribosomal protein uS11 family. In terms of assembly, part of the 30S ribosomal subunit. Interacts with proteins S7 and S18. Binds to IF-3.

Located on the platform of the 30S subunit, it bridges several disparate RNA helices of the 16S rRNA. Forms part of the Shine-Dalgarno cleft in the 70S ribosome. The chain is Small ribosomal subunit protein uS11 from Leptothrix cholodnii (strain ATCC 51168 / LMG 8142 / SP-6) (Leptothrix discophora (strain SP-6)).